The following is a 383-amino-acid chain: Chorismate synthase (383 aa).

Arginine 48 is a binding site for NADP(+). FMN-binding positions include 125–127 (RSS), glycine 286, 301–305 (HAPTS), and arginine 328. The tract at residues 361–383 (PDRLDDNPGQYETEYHPSSPQTN) is disordered.

This sequence belongs to the chorismate synthase family. The cofactor is FMNH2.

The enzyme catalyses 5-O-(1-carboxyvinyl)-3-phosphoshikimate = chorismate + phosphate. It functions in the pathway metabolic intermediate biosynthesis; chorismate biosynthesis; chorismate from D-erythrose 4-phosphate and phosphoenolpyruvate: step 7/7. Its function is as follows. Catalyzes the anti-1,4-elimination of the C-3 phosphate and the C-6 proR hydrogen from 5-enolpyruvylshikimate-3-phosphate (EPSP) to yield chorismate, which is the branch point compound that serves as the starting substrate for the three terminal pathways of aromatic amino acid biosynthesis. This reaction introduces a second double bond into the aromatic ring system. This chain is Chorismate synthase, found in Haloquadratum walsbyi (strain DSM 16790 / HBSQ001).